Reading from the N-terminus, the 181-residue chain is Bifunctional adenosylcobalamin biosynthesis protein CobU (181 aa).

GTP-binding positions include 7 to 14 (GGARSGKS) and 31 to 33 (ATS). The active-site GMP-histidine intermediate is H47. GTP is bound by residues 48 to 51 (KDGR), E59, and E81.

It belongs to the CobU/CobP family. As to quaternary structure, homotrimer.

The catalysed reaction is adenosylcob(III)inamide + GTP = adenosylcob(III)inamide phosphate + GDP + H(+). It catalyses the reaction adenosylcob(III)inamide + ATP = adenosylcob(III)inamide phosphate + ADP + H(+). The enzyme catalyses adenosylcob(III)inamide phosphate + GTP + H(+) = adenosylcob(III)inamide-GDP + diphosphate. It functions in the pathway cofactor biosynthesis; adenosylcobalamin biosynthesis; adenosylcobalamin from cob(II)yrinate a,c-diamide: step 5/7. Its pathway is cofactor biosynthesis; adenosylcobalamin biosynthesis; adenosylcobalamin from cob(II)yrinate a,c-diamide: step 6/7. Functionally, catalyzes ATP-dependent phosphorylation of adenosylcobinamide and addition of GMP to adenosylcobinamide phosphate. This is Bifunctional adenosylcobalamin biosynthesis protein CobU (cobU) from Salmonella typhimurium (strain LT2 / SGSC1412 / ATCC 700720).